The following is a 317-amino-acid chain: Cell division protein FtsX (317 aa).

At 1-39 the chain is on the cytoplasmic side; it reads MAIVRHKQPPLRRFMMYWVDHARQAFSSLGELWRNPLAS. A helical transmembrane segment spans residues 40–60; that stretch reads LMTLAVLGVSLALPSCFHVLL. The Periplasmic segment spans residues 61–188; the sequence is KNAEVVEGSW…LQGIMNLLRH (128 aa). Residues 189–209 form a helical membrane-spanning segment; sequence TITGIAVLLLSAVLLIVGNTL. The Cytoplasmic portion of the chain corresponds to 210–241; that stretch reads RLNILNQRSEIEVLKLVGATDAFIHRPFLYTG. A helical membrane pass occupies residues 242–262; the sequence is IWFGVIGGMLAWWLTEVMVIW. Over 263–280 the chain is Periplasmic; the sequence is SEGVVNELAGLYNSNFRL. Residues 281-301 traverse the membrane as a helical segment; sequence VGMGAVDGINLILLGALLGLI. At 302 to 317 the chain is on the cytoplasmic side; sequence ASWFSVHRHIRDIEPS.

The protein belongs to the ABC-4 integral membrane protein family. FtsX subfamily. As to quaternary structure, forms a membrane-associated complex with FtsE.

The protein localises to the cell inner membrane. Part of the ABC transporter FtsEX involved in cellular division. Encoded in an operon consisting of genes ftsY, ftsE and ftsX. In Aeromonas hydrophila, this protein is Cell division protein FtsX.